The following is an 89-amino-acid chain: Small ribosomal subunit protein uS15c (89 aa).

The protein belongs to the universal ribosomal protein uS15 family. Part of the 30S ribosomal subunit.

It localises to the plastid. The protein localises to the organellar chromatophore. This Paulinella chromatophora protein is Small ribosomal subunit protein uS15c (rps15).